Here is a 750-residue protein sequence, read N- to C-terminus: Penicillin-binding protein 2x (750 aa).

The chain crosses the membrane as a helical span at residues 29–49; that stretch reads LSLLSVFVFAIFLVNFAVIIG. Serine 337 serves as the catalytic Acyl-ester intermediate. PASTA domains are found at residues 632–691 and 692–750; these read QQSP…ILSD and KAEE…TLGD.

Belongs to the transpeptidase family.

Its subcellular location is the cell membrane. A transpeptidase that forms peptide cross-links between adjacent glycan strands in cell wall peptidoglycan (PG). Part of the divisome machinery that synthesizes the septal cross wall. Beta-lactams inactivate the PBPs by acylating an essential serine residue in the active site of these proteins. The sequence is that of Penicillin-binding protein 2x (pbpX) from Streptococcus pneumoniae serotype 4 (strain ATCC BAA-334 / TIGR4).